A 330-amino-acid polypeptide reads, in one-letter code: Autoinducer 2 import system permease protein LsrD (330 aa).

The Cytoplasmic segment spans residues 1–4 (MRIR). Residues 5-25 (YGWELALAALLVIEIVAFGAI) traverse the membrane as a helical segment. The Periplasmic segment spans residues 26–42 (NPRMLDLNMLLFSTSDF). A helical membrane pass occupies residues 43–63 (ICIGIVALPLTMVIVSGGIDI). The Cytoplasmic segment spans residues 64–67 (SFGS). Helical transmembrane passes span 68–88 (TIGL…PMPL) and 89–109 (AILL…GLII). At 110 to 115 (YTKVNP) the chain is on the cytoplasmic side. The helical transmembrane segment at 116–136 (LVITLGTLYLFAGSALLLSGM) threads the bilayer. The Periplasmic portion of the chain corresponds to 137-159 (AGATGYEGIGGFPMAFTDFANLD). A helical membrane pass occupies residues 160 to 180 (VLGLPVPLIIFLICLLVFWLW). The Cytoplasmic portion of the chain corresponds to 181-209 (LHKTHAGRNVFLIGQSPRVAVYSAIPVNR). A helical transmembrane segment spans residues 210–230 (TLCALYAMTGLASAVAAVLLV). Over 231–237 (SYFGSAR) the chain is Periplasmic. The next 2 membrane-spanning stretches (helical) occupy residues 238 to 258 (SDLG…GGAN) and 259 to 279 (IYGG…VGYL). The Periplasmic portion of the chain corresponds to 280–285 (QQGLQM). The chain crosses the membrane as a helical span at residues 286–306 (AGVPNQVSSALSGALLIVVVV). The Cytoplasmic portion of the chain corresponds to 307–330 (GRSVSLHRQQIKEWLARRANNPLP).

This sequence belongs to the binding-protein-dependent transport system permease family. AraH/RbsC subfamily. In terms of assembly, the complex is composed of two ATP-binding proteins (LsrA), two transmembrane proteins (LsrC and LsrD) and a solute-binding protein (LsrB).

It is found in the cell inner membrane. Its function is as follows. Part of the ABC transporter complex LsrABCD involved in autoinducer 2 (AI-2) import. Probably responsible for the translocation of the substrate across the membrane. The chain is Autoinducer 2 import system permease protein LsrD (lsrD) from Escherichia coli (strain SMS-3-5 / SECEC).